We begin with the raw amino-acid sequence, 4318 residues long: Cytoplasmic dynein 2 heavy chain 1 (4318 aa).

The interval 1–1658 is stem; sequence MPAEDARKEY…IMRMVDAEFQ (1658 aa). Residue 147–154 participates in ATP binding; the sequence is LKSLVRKQ. Coiled-coil stretches lie at residues 1328–1354 and 1402–1431; these read DKAT…QRKW and LRTT…RSIL. AAA stretches follow at residues 1659-1883, 1951-2171, 2261-2515, and 2623-2871; these read YTYE…VLRG, DAIR…RQGD, ASDF…WVLG, and TFAR…SSSV. 1697–1704 serves as a coordination point for ATP; sequence GPAGTGKT. Residues 1959 to 1986 adopt a coiled-coil conformation; sequence EHNLVVMETQVKKALELYEQLRQRMGVV. Residues 1989–1996, 2301–2308, and 2661–2668 contribute to the ATP site; these read GPSGSGKS, GPDGCGKG, and GRSGVGRR. Residues 2888–3176 are stalk; it reads DVYRRKKQGV…YELEKEQETI (289 aa). Coiled-coil stretches lie at residues 2908-2989 and 3423-3480; these read VAKL…AEIE and QHEK…KTKE. AAA regions lie at residues 3251–3487 and 3699–3914; these read LSTE…TITQ and MTFF…IIDR.

The protein belongs to the dynein heavy chain family. As to quaternary structure, the cytoplasmic dynein complex 2 is probably composed by a heavy chain DYH1B homodimer and a number of light intermediate chains.

It localises to the cytoplasm. The protein localises to the cytoskeleton. The protein resides in the cilium axoneme. It is found in the cell membrane. May function as a motor for intraflagellar retrograde transport. Functions in cilia biogenesis. This is Cytoplasmic dynein 2 heavy chain 1 (DYH1B) from Tripneustes gratilla (Hawaian sea urchin).